The chain runs to 138 residues: ATP synthase epsilon chain (138 aa).

Belongs to the ATPase epsilon chain family. In terms of assembly, F-type ATPases have 2 components, CF(1) - the catalytic core - and CF(0) - the membrane proton channel. CF(1) has five subunits: alpha(3), beta(3), gamma(1), delta(1), epsilon(1). CF(0) has three main subunits: a, b and c.

It localises to the cell inner membrane. In terms of biological role, produces ATP from ADP in the presence of a proton gradient across the membrane. The sequence is that of ATP synthase epsilon chain from Polaromonas naphthalenivorans (strain CJ2).